A 141-amino-acid chain; its full sequence is MAKQVEKLVKLQIPAGKATPAPPVGPALGQAGVNIMGFTKEFNARTADQAGMIIPVVISVYDDKSFTFITKTPPAAVLLKKAAGVQKGSGEPNKTKVASVTKAQIKEIAELKMPDLNAASVETAMSMIEGTAKSMGFTVTD.

This sequence belongs to the universal ribosomal protein uL11 family. As to quaternary structure, part of the ribosomal stalk of the 50S ribosomal subunit. Interacts with L10 and the large rRNA to form the base of the stalk. L10 forms an elongated spine to which L12 dimers bind in a sequential fashion forming a multimeric L10(L12)X complex. Post-translationally, one or more lysine residues are methylated.

Functionally, forms part of the ribosomal stalk which helps the ribosome interact with GTP-bound translation factors. The polypeptide is Large ribosomal subunit protein uL11 (Lactococcus lactis subsp. cremoris (strain MG1363)).